The sequence spans 478 residues: Signal recognition particle receptor FtsY (478 aa).

Basic and acidic residues-rich tracts occupy residues 14 to 33 (KDKA…ERGN) and 45 to 56 (AEAHDAVDKDPV). Positions 14-94 (KDKAETEERP…DAPLLPGAEL (81 aa)) are disordered. Residues 71 to 86 (EAVDVAPAEDDEEEDA) show a composition bias toward acidic residues. Residues 283-290 (GVNGTGKT), 365-369 (DTAGR), and 429-432 (TKLD) contribute to the GTP site.

Belongs to the GTP-binding SRP family. FtsY subfamily. In terms of assembly, part of the signal recognition particle protein translocation system, which is composed of SRP and FtsY. SRP is a ribonucleoprotein composed of Ffh and a 4.5S RNA molecule.

The protein resides in the cell inner membrane. The protein localises to the cytoplasm. The catalysed reaction is GTP + H2O = GDP + phosphate + H(+). Functionally, involved in targeting and insertion of nascent membrane proteins into the cytoplasmic membrane. Acts as a receptor for the complex formed by the signal recognition particle (SRP) and the ribosome-nascent chain (RNC). Interaction with SRP-RNC leads to the transfer of the RNC complex to the Sec translocase for insertion into the membrane, the hydrolysis of GTP by both Ffh and FtsY, and the dissociation of the SRP-FtsY complex into the individual components. In Agrobacterium fabrum (strain C58 / ATCC 33970) (Agrobacterium tumefaciens (strain C58)), this protein is Signal recognition particle receptor FtsY.